The following is a 567-amino-acid chain: Phenylalanine ammonia-lyase (567 aa).

Residue Tyr78 is the Proton donor/acceptor of the active site. The segment at residues 167–169 is a cross-link (5-imidazolinone (Ala-Gly)); that stretch reads ASG. Ser168 is subject to 2,3-didehydroalanine (Ser). Positions 223, 311, 317, 347, 419, 448, and 451 each coordinate (E)-cinnamate.

This sequence belongs to the PAL/histidase family. As to quaternary structure, homotetramer. In terms of processing, contains an active site 4-methylidene-imidazol-5-one (MIO), which is formed autocatalytically by cyclization and dehydration of residues Ala-Ser-Gly.

Its subcellular location is the cytoplasm. The catalysed reaction is L-phenylalanine = (E)-cinnamate + NH4(+). It functions in the pathway phenylpropanoid metabolism; trans-cinnamate biosynthesis; trans-cinnamate from L-phenylalanine: step 1/1. Its function is as follows. Catalyzes the non-oxidative deamination of L-phenylalanine to form trans-cinnamic acid, the first step in the phenylpropanoid pathway. This chain is Phenylalanine ammonia-lyase, found in Trichormus variabilis (strain ATCC 29413 / PCC 7937) (Anabaena variabilis).